The primary structure comprises 426 residues: Serine--tRNA ligase (426 aa).

235-237 (TAE) provides a ligand contact to L-serine. ATP is bound by residues 266-268 (RRE) and Val-282. An L-serine-binding site is contributed by Glu-289. Residue 353–356 (EASS) coordinates ATP. Residue Ser-389 coordinates L-serine.

Belongs to the class-II aminoacyl-tRNA synthetase family. Type-1 seryl-tRNA synthetase subfamily. In terms of assembly, homodimer. The tRNA molecule binds across the dimer.

It is found in the cytoplasm. It carries out the reaction tRNA(Ser) + L-serine + ATP = L-seryl-tRNA(Ser) + AMP + diphosphate + H(+). The catalysed reaction is tRNA(Sec) + L-serine + ATP = L-seryl-tRNA(Sec) + AMP + diphosphate + H(+). It participates in aminoacyl-tRNA biosynthesis; selenocysteinyl-tRNA(Sec) biosynthesis; L-seryl-tRNA(Sec) from L-serine and tRNA(Sec): step 1/1. Its function is as follows. Catalyzes the attachment of serine to tRNA(Ser). Is also able to aminoacylate tRNA(Sec) with serine, to form the misacylated tRNA L-seryl-tRNA(Sec), which will be further converted into selenocysteinyl-tRNA(Sec). In Chlorobium chlorochromatii (strain CaD3), this protein is Serine--tRNA ligase.